Reading from the N-terminus, the 252-residue chain is Triosephosphate isomerase (252 aa).

Residue 10–12 participates in substrate binding; the sequence is NWK. His-96 serves as the catalytic Electrophile. Catalysis depends on Glu-168, which acts as the Proton acceptor. Substrate is bound by residues Gly-174, Ser-214, and 235–236; that span reads GG.

The protein belongs to the triosephosphate isomerase family. Homodimer.

Its subcellular location is the cytoplasm. It catalyses the reaction D-glyceraldehyde 3-phosphate = dihydroxyacetone phosphate. It functions in the pathway carbohydrate biosynthesis; gluconeogenesis. It participates in carbohydrate degradation; glycolysis; D-glyceraldehyde 3-phosphate from glycerone phosphate: step 1/1. Functionally, involved in the gluconeogenesis. Catalyzes stereospecifically the conversion of dihydroxyacetone phosphate (DHAP) to D-glyceraldehyde-3-phosphate (G3P). The chain is Triosephosphate isomerase from Streptococcus pyogenes serotype M6 (strain ATCC BAA-946 / MGAS10394).